The primary structure comprises 520 residues: Cytochrome P450 315a1, mitochondrial (520 aa).

Cys-466 is a binding site for heme.

The protein belongs to the cytochrome P450 family. Heme is required as a cofactor. Complex coexpression pattern of dib (disembodied) and sad (shade) in the early embryo that restricts to the prothoracic gland cells of the developing ring gland during late embryogenesis. In larvae and adult, coexpression is seen in prothoracic gland and follicle cells of the ovary. In adults, coexpression is seen in the follicle cells, sad only is expressed in nurse cells.

It is found in the mitochondrion membrane. It catalyses the reaction 2-deoxyecdysone + 2 reduced [adrenodoxin] + O2 + 2 H(+) = ecdysone + 2 oxidized [adrenodoxin] + H2O. It carries out the reaction 2,22-dideoxyecdysone + 2 reduced [adrenodoxin] + O2 + 2 H(+) = 22-deoxyecdysone + 2 oxidized [adrenodoxin] + H2O. The protein operates within steroid biosynthesis; ecdysteroid biosynthesis. Functionally, required for CNS development: midline glial cells. Involved in the metabolism of insect hormones: responsible for ecdysteroid C2-hydroxylase activity. May be involved in the breakdown of synthetic insecticides. This Drosophila melanogaster (Fruit fly) protein is Cytochrome P450 315a1, mitochondrial.